We begin with the raw amino-acid sequence, 459 residues long: Argininosuccinate lyase (459 aa).

It belongs to the lyase 1 family. Argininosuccinate lyase subfamily.

Its subcellular location is the cytoplasm. It catalyses the reaction 2-(N(omega)-L-arginino)succinate = fumarate + L-arginine. Its pathway is amino-acid biosynthesis; L-arginine biosynthesis; L-arginine from L-ornithine and carbamoyl phosphate: step 3/3. The polypeptide is Argininosuccinate lyase (Sulfurihydrogenibium sp. (strain YO3AOP1)).